A 344-amino-acid polypeptide reads, in one-letter code: Heat-inducible transcription repressor HrcA (344 aa).

The protein belongs to the HrcA family.

Its function is as follows. Negative regulator of class I heat shock genes (grpE-dnaK-dnaJ and groELS operons). Prevents heat-shock induction of these operons. This is Heat-inducible transcription repressor HrcA from Geobacillus stearothermophilus (Bacillus stearothermophilus).